The sequence spans 565 residues: NAD-dependent malic enzyme (565 aa).

The active-site Proton donor is tyrosine 104. Residue arginine 157 coordinates NAD(+). The Proton acceptor role is filled by lysine 175. Residues glutamate 246, aspartate 247, and aspartate 270 each contribute to the a divalent metal cation site. NAD(+) is bound by residues aspartate 270 and asparagine 418.

This sequence belongs to the malic enzymes family. Homotetramer. Requires Mg(2+) as cofactor. The cofactor is Mn(2+).

The enzyme catalyses (S)-malate + NAD(+) = pyruvate + CO2 + NADH. The catalysed reaction is oxaloacetate + H(+) = pyruvate + CO2. This Salmonella dublin (strain CT_02021853) protein is NAD-dependent malic enzyme.